We begin with the raw amino-acid sequence, 573 residues long: DNA ligase (573 aa).

E250 contributes to the ATP binding site. The active-site N6-AMP-lysine intermediate is K252. R257, R272, E301, F342, R432, and K438 together coordinate ATP.

The protein belongs to the ATP-dependent DNA ligase family. Mg(2+) serves as cofactor.

It carries out the reaction ATP + (deoxyribonucleotide)n-3'-hydroxyl + 5'-phospho-(deoxyribonucleotide)m = (deoxyribonucleotide)n+m + AMP + diphosphate.. Its function is as follows. DNA ligase that seals nicks in double-stranded DNA during DNA replication, DNA recombination and DNA repair. This is DNA ligase from Methanococcus vannielii (strain ATCC 35089 / DSM 1224 / JCM 13029 / OCM 148 / SB).